We begin with the raw amino-acid sequence, 1199 residues long: DNA-directed RNA polymerase subunit beta (1199 aa).

The disordered stretch occupies residues 1175-1199 (EEKKAHEAAAQATDGKSANSTDDKK). A compositionally biased stretch (polar residues) spans 1188-1199 (DGKSANSTDDKK).

Belongs to the RNA polymerase beta chain family. In terms of assembly, the RNAP catalytic core consists of 2 alpha, 1 beta, 1 beta' and 1 omega subunit. When a sigma factor is associated with the core the holoenzyme is formed, which can initiate transcription.

It carries out the reaction RNA(n) + a ribonucleoside 5'-triphosphate = RNA(n+1) + diphosphate. Functionally, DNA-dependent RNA polymerase catalyzes the transcription of DNA into RNA using the four ribonucleoside triphosphates as substrates. The chain is DNA-directed RNA polymerase subunit beta from Lacticaseibacillus casei (strain BL23) (Lactobacillus casei).